The primary structure comprises 141 residues: Hemoglobin subunit alpha (141 aa).

The Globin domain maps to 1-141; sequence VLSPEDKNHV…VSTVLTSKYR (141 aa). A Phosphoserine modification is found at serine 3. An N6-succinyllysine modification is found at lysine 7. The residue at position 16 (lysine 16) is an N6-acetyllysine; alternate. Lysine 16 carries the post-translational modification N6-succinyllysine; alternate. Residue tyrosine 24 is modified to Phosphotyrosine. Serine 35 bears the Phosphoserine mark. Lysine 40 carries the N6-succinyllysine modification. Phosphoserine is present on serine 49. Histidine 58 is a binding site for O2. Heme b is bound at residue histidine 87. Serine 102 carries the post-translational modification Phosphoserine. Phosphothreonine is present on threonine 108. Serine 124 and serine 131 each carry phosphoserine. Phosphothreonine is present on residues threonine 134 and threonine 137. Serine 138 carries the post-translational modification Phosphoserine.

The protein belongs to the globin family. In terms of assembly, heterotetramer of two alpha chains and two beta chains. Red blood cells.

Involved in oxygen transport from the lung to the various peripheral tissues. In terms of biological role, hemopressin acts as an antagonist peptide of the cannabinoid receptor CNR1. Hemopressin-binding efficiently blocks cannabinoid receptor CNR1 and subsequent signaling. In Spalax ehrenbergi (Middle East blind mole rat), this protein is Hemoglobin subunit alpha (HBA).